We begin with the raw amino-acid sequence, 757 residues long: GTPase-activating protein GYP7 (757 aa).

The 246-residue stretch at 395 to 640 (GLEDCIRGEA…SLWEILWTDY (246 aa)) folds into the Rab-GAP TBC domain. The interval 482-507 (GVGSDRLPTTRESSPETPDEADDDEF) is disordered. Residues 498–507 (TPDEADDDEF) show a composition bias toward acidic residues.

Most effectively accelerate the intrinsic GTPase activity of YPT7. It is also active, but to a lesser extent, on YPT31, YPT32 and YPT1. YPT6 and SEC4. The polypeptide is GTPase-activating protein GYP7 (GYP7) (Debaryomyces hansenii (strain ATCC 36239 / CBS 767 / BCRC 21394 / JCM 1990 / NBRC 0083 / IGC 2968) (Yeast)).